The primary structure comprises 306 residues: Ribosomal RNA small subunit methyltransferase H (306 aa).

Residues 33 to 35, aspartate 51, phenylalanine 78, aspartate 96, and glutamine 103 contribute to the S-adenosyl-L-methionine site; that span reads GGY.

The protein belongs to the methyltransferase superfamily. RsmH family.

The protein localises to the cytoplasm. It carries out the reaction cytidine(1402) in 16S rRNA + S-adenosyl-L-methionine = N(4)-methylcytidine(1402) in 16S rRNA + S-adenosyl-L-homocysteine + H(+). Functionally, specifically methylates the N4 position of cytidine in position 1402 (C1402) of 16S rRNA. This chain is Ribosomal RNA small subunit methyltransferase H, found in Rickettsia felis (strain ATCC VR-1525 / URRWXCal2) (Rickettsia azadi).